Here is a 329-residue protein sequence, read N- to C-terminus: Calcium homeostasis modulator protein (329 aa).

Topologically, residues 1–14 (MTTSINSVVTVFQN) are cytoplasmic. The chain crosses the membrane as a helical span at residues 15–35 (VFTNHGSTLLNGILIATTVGG). The Extracellular segment spans residues 36-53 (QSLVRKLTFSCPCAYPLN). Residues 54-74 (IYHSLVFMFGPTAALLLIGIT) form a helical membrane-spanning segment. The Cytoplasmic portion of the chain corresponds to 75–103 (VNSTTWKLAHGFFFRVRDTRHSWKTTCVS). A helical transmembrane segment spans residues 104 to 124 (WIEVLIQSSVAPIAWLFVVFL). Residues 125–191 (DGGYYRCYRS…DASYLEAESQ (67 aa)) lie on the Extracellular side of the membrane. Residue N148 is glycosylated (N-linked (GlcNAc...) asparagine). A helical membrane pass occupies residues 192-212 (IYAWGLLLFSGVAAFLVITCN). At 213 to 329 (RMCDKYTLVQ…QIIVDETKED (117 aa)) the chain is on the cytoplasmic side.

Belongs to the CALHM family. Expressed in head and body wall muscles, IL2, ASG, ASI, ASJ, PHA and PHB sensory neurons, and spermatheca.

The protein resides in the cell membrane. Its function is as follows. Pore-forming subunit of a voltage-gated ion channel. Permeable to monovalent cations, divalent cations and anions with selectivity Ca(2+) &gt; Mg(2+) &gt; Na(+) = K(+) &gt; Cl(-). Acts both as a voltage-gated and calcium-activated ion channel. Required for normal locomotion. The chain is Calcium homeostasis modulator protein from Caenorhabditis elegans.